We begin with the raw amino-acid sequence, 116 residues long: Tyrosine-protein phosphatase 14 (116 aa).

The Tyrosine-protein phosphatase domain maps to 1 to 116 (WRMITQEKAQ…SLKNPGPVIV (116 aa)). A substrate-binding site is contributed by aspartate 84.

This sequence belongs to the protein-tyrosine phosphatase family.

It carries out the reaction O-phospho-L-tyrosyl-[protein] + H2O = L-tyrosyl-[protein] + phosphate. This chain is Tyrosine-protein phosphatase 14 (STY-14), found in Styela plicata (Wrinkled sea squirt).